Reading from the N-terminus, the 662-residue chain is Glutathione hydrolase 7 (662 aa).

Over 1 to 106 (MAAENEASQE…AAECSCRQDG (106 aa)) the chain is Cytoplasmic. Phosphoserine occurs at positions 17, 72, 79, and 83. Residues 26-90 (SFPRLPEDEP…DGSPLRETRK (65 aa)) form a disordered region. The segment covering 72–83 (SSSSEMGSQDGS) has biased composition (low complexity). Residues 107-127 (LTVIVTACLTFATGVTVALVM) form a helical; Signal-anchor for type II membrane protein membrane-spanning segment. The Extracellular segment spans residues 128–662 (QIYFGDPQIF…SPDAAGATIL (535 aa)). Residues N198, N267, N283, N330, N353, N394, N519, N523, and N586 are each glycosylated (N-linked (GlcNAc...) asparagine).

This sequence belongs to the gamma-glutamyltransferase family. In terms of assembly, heterodimer composed of the light and heavy chains. The active site is located in the light chain. Post-translationally, cleaved by autocatalysis into a large and a small subunit and the autocatalytic cleavage is essential to the functional activation of the enzyme.

Its subcellular location is the membrane. It carries out the reaction an N-terminal (5-L-glutamyl)-[peptide] + an alpha-amino acid = 5-L-glutamyl amino acid + an N-terminal L-alpha-aminoacyl-[peptide]. It catalyses the reaction glutathione + H2O = L-cysteinylglycine + L-glutamate. The enzyme catalyses an S-substituted glutathione + H2O = an S-substituted L-cysteinylglycine + L-glutamate. The protein operates within sulfur metabolism; glutathione metabolism. Its function is as follows. Hydrolyzes and transfers gamma-glutamyl moieties from glutathione and other gamma-glutamyl compounds to acceptors. The protein is Glutathione hydrolase 7 of Mus musculus (Mouse).